The sequence spans 378 residues: Ribosomal RNA large subunit methyltransferase G (378 aa).

It belongs to the methyltransferase superfamily. RlmG family.

The protein resides in the cytoplasm. It catalyses the reaction guanosine(1835) in 23S rRNA + S-adenosyl-L-methionine = N(2)-methylguanosine(1835) in 23S rRNA + S-adenosyl-L-homocysteine + H(+). In terms of biological role, specifically methylates the guanine in position 1835 (m2G1835) of 23S rRNA. The polypeptide is Ribosomal RNA large subunit methyltransferase G (Escherichia coli O1:K1 / APEC).